Consider the following 330-residue polypeptide: Aspartate--ammonia ligase (330 aa).

Belongs to the class-II aminoacyl-tRNA synthetase family. AsnA subfamily. As to quaternary structure, homodimer.

Its subcellular location is the cytoplasm. It carries out the reaction L-aspartate + NH4(+) + ATP = L-asparagine + AMP + diphosphate + H(+). The protein operates within amino-acid biosynthesis; L-asparagine biosynthesis; L-asparagine from L-aspartate (ammonia route): step 1/1. The polypeptide is Aspartate--ammonia ligase (Salmonella typhimurium (strain LT2 / SGSC1412 / ATCC 700720)).